A 317-amino-acid polypeptide reads, in one-letter code: Melanocyte-stimulating hormone receptor (317 aa).

The Extracellular portion of the chain corresponds to methionine 1–glutamate 37. The N-linked (GlcNAc...) asparagine glycan is linked to asparagine 29. The chain crosses the membrane as a helical span at residues valine 38–isoleucine 63. Residues alanine 64 to proline 72 lie on the Cytoplasmic side of the membrane. A helical transmembrane segment spans residues methionine 73–leucine 93. The Extracellular segment spans residues glutamate 94 to asparagine 118. Residues valine 119–valine 140 traverse the membrane as a helical segment. Over aspartate 141–arginine 163 the chain is Cytoplasmic. A helical membrane pass occupies residues alanine 164–tyrosine 183. The Extracellular segment spans residues aspartate 184–cysteine 191. Residues leucine 192–leucine 211 traverse the membrane as a helical segment. Residues alanine 212–alanine 240 lie on the Cytoplasmic side of the membrane. The chain crosses the membrane as a helical span at residues valine 241 to leucine 266. Residues cysteine 267–asparagine 279 are Extracellular-facing. A helical transmembrane segment spans residues phenylalanine 280 to phenylalanine 300. At histidine 301–tryptophan 317 the chain is on the cytoplasmic side. Cysteine 315 carries the S-palmitoyl cysteine lipid modification.

It belongs to the G-protein coupled receptor 1 family. As to quaternary structure, interacts with MGRN1, but does not undergo MGRN1-mediated ubiquitination; this interaction competes with GNAS-binding and thus inhibits agonist-induced cAMP production. Interacts with OPN3; the interaction results in a decrease in MC1R-mediated cAMP signaling and ultimately a decrease in melanin production in melanocytes. In terms of tissue distribution, expressed in melanocytes. Expressed in corticoadrenal tissue.

The protein localises to the cell membrane. Its function is as follows. Receptor for MSH (alpha, beta and gamma) and ACTH. The activity of this receptor is mediated by G proteins which activate adenylate cyclase. Mediates melanogenesis, the production of eumelanin (black/brown) and phaeomelanin (red/yellow), via regulation of cAMP signaling in melanocytes. The polypeptide is Melanocyte-stimulating hormone receptor (MC1R) (Homo sapiens (Human)).